A 389-amino-acid chain; its full sequence is Cellobiose 2-epimerase (389 aa).

It belongs to the cellobiose 2-epimerase family.

The protein localises to the cytoplasm. The enzyme catalyses D-cellobiose = beta-D-glucosyl-(1-&gt;4)-D-mannopyranose. Enhanced by Mg(2+) and Ca(2+) ions, ethylenediaminetetraacetic acid, ethylene glycol tetraacetic acid and citrate. Inhibited by Al(3+), Fe(3+), Co(2+), Cu(2+), Zn(2+), Pb(2+) and Ag(+) ions, iodoacetate, 4-chloromercuribenzoate and N-bromosuccinimide. Catalyzes the reversible epimerization of cellobiose to 4-O-beta-D-glucopyranosyl-D-mannose (Glc-Man). Can also epimerize cellotriose to Glc-Glc-Man, cellotetraose to Glc-Glc-Glc-Man, and lactose to epilactose. The sequence is that of Cellobiose 2-epimerase (ce-ne1) from Ruminococcus albus.